The chain runs to 732 residues: uncharacterized protein (732 aa).

The protein belongs to the mimivirus L137 family.

This is an uncharacterized protein from Acanthamoeba polyphaga mimivirus (APMV).